The sequence spans 406 residues: Betaine--homocysteine S-methyltransferase 1 (406 aa).

The region spanning lysine 11 to leucine 314 is the Hcy-binding domain. N6-succinyllysine is present on residues lysine 40, lysine 93, and lysine 98. Zn(2+) is bound at residue cysteine 217. An N6-succinyllysine mark is found at lysine 232 and lysine 241. Residues cysteine 299 and cysteine 300 each coordinate Zn(2+). At serine 330 the chain carries Phosphoserine. Residues lysine 340 and lysine 377 each carry the N6-succinyllysine modification.

Homotetramer. It depends on Zn(2+) as a cofactor.

It is found in the cytoplasm. Its subcellular location is the cytosol. The protein localises to the nucleus. It catalyses the reaction L-homocysteine + glycine betaine = N,N-dimethylglycine + L-methionine. The protein operates within amine and polyamine degradation; betaine degradation; sarcosine from betaine: step 1/2. It functions in the pathway amino-acid biosynthesis; L-methionine biosynthesis via de novo pathway; L-methionine from L-homocysteine (BhmT route): step 1/1. Involved in the regulation of homocysteine metabolism. Converts betaine and homocysteine to dimethylglycine and methionine, respectively. This reaction is also required for the irreversible oxidation of choline. The polypeptide is Betaine--homocysteine S-methyltransferase 1 (BHMT) (Pongo abelii (Sumatran orangutan)).